A 295-amino-acid polypeptide reads, in one-letter code: Ethanolamine ammonia-lyase small subunit (295 aa).

Positions 207, 228, and 258 each coordinate adenosylcob(III)alamin.

Belongs to the EutC family. The basic unit is a heterodimer which dimerizes to form tetramers. The heterotetramers trimerize; 6 large subunits form a core ring with 6 small subunits projecting outwards. Adenosylcob(III)alamin is required as a cofactor.

The protein resides in the bacterial microcompartment. The catalysed reaction is ethanolamine = acetaldehyde + NH4(+). It participates in amine and polyamine degradation; ethanolamine degradation. In terms of biological role, catalyzes the deamination of various vicinal amino-alcohols to oxo compounds. Allows this organism to utilize ethanolamine as the sole source of nitrogen and carbon in the presence of external vitamin B12. The sequence is that of Ethanolamine ammonia-lyase small subunit from Escherichia fergusonii (strain ATCC 35469 / DSM 13698 / CCUG 18766 / IAM 14443 / JCM 21226 / LMG 7866 / NBRC 102419 / NCTC 12128 / CDC 0568-73).